Here is a 391-residue protein sequence, read N- to C-terminus: Inner membrane protein YdcO (391 aa).

Over Met1–Pro9 the chain is Cytoplasmic. Residues Thr10 to Trp30 form a helical membrane-spanning segment. Topologically, residues Gln31 to Gln42 are periplasmic. The chain crosses the membrane as a helical span at residues Ile43–Leu63. Residues Trp64–Ala93 lie on the Cytoplasmic side of the membrane. Residues Ile94–Ala114 form a helical membrane-spanning segment. At Arg115–Ser123 the chain is on the periplasmic side. Residues Leu124–Leu144 traverse the membrane as a helical segment. Residues Asp145–Arg167 lie on the Cytoplasmic side of the membrane. A helical transmembrane segment spans residues Tyr168–Val188. Topologically, residues Thr189 to Thr200 are periplasmic. A helical membrane pass occupies residues Tyr201–Val221. Residues Thr222–Leu246 are Cytoplasmic-facing. Residues Ile247–Ile267 traverse the membrane as a helical segment. The Periplasmic segment spans residues Ala268–Arg287. A helical membrane pass occupies residues Trp288 to Ile308. At Thr309–Met311 the chain is on the cytoplasmic side. The helical transmembrane segment at Met312–Ile332 threads the bilayer. Over Gly333–Thr361 the chain is Periplasmic. A helical transmembrane segment spans residues Leu362–Leu382. At Asn383–Tyr391 the chain is on the cytoplasmic side.

The protein resides in the cell inner membrane. In Escherichia coli (strain K12), this protein is Inner membrane protein YdcO (ydcO).